Reading from the N-terminus, the 1403-residue chain is MLLNIVLISNLACLAFALPLKEGTRGSRCFLNGELVKTVNTSKVVSECCVKDDISIIKSNAEHYKSGDRLAAVIKYYRLYQVKDWHSCNPIYDDHGSFMILDIDNTGTLIPKMHTCRVECEIALNKDTGEVILNSYRINHYRISGTMHVSGWFKNKIEIPLENTCESIEVTCGLKTLNFHACFHTHKSCTRYFKGSILPELMIESFCTNLELILLVTFILVGSVMMMILTKTYIVYVFIPIFYPFVKLYAYMYNKYFKLCKNCLLAVHPFTNCPSTCICGMIYTTTESLKLHRMCNNCSGYKALPKTRKLCKSKISNIVLCVITSLIFFSFITPISSQCIDIEKLPDEYITCKRELANIKSLTIDDTYSFIYSCTCIIVLILLKKAAKYILYCNCSFCGMVHERRGLKIMDNFTNKCLSCVCAENKGLTIHRASEKCLFKFESSYNRTGLIIFMLLLVPTIVMTQETSINCKNIQSTQLTIEHLSKCMAFYQNKTSSPVVINEIISDASVDEQELIKSLNLNCNVIDRFISESSVIETQVYYEYIKSQLCPLQVHDIFTINSASNIQWKALARSFTLGVCNTNPHKHICRCLESMQMCTSTKTDHAREMSIYYDGHPDRFEHDMKIILNIMRYIVPGLGRVLLDQIKQTKDYQALRHIQGKLSPKSQSNLQLKGFLEFVDFILGANVTIEKTPQTLTTLSLIKGAHRNLDQKDPGPTPILVCKSPQKVVCYSPRGVTHPGDYISCKSKMYKWPSLGVYKHNRDQQQACSSDTHCLEMFEPAERTITTKICKVSDMTYSESPYSTGIPSCNVKRFGSCNVRGHQWQIAECSNGLFYYVSAKAHSKTNDITLYCLSANCLDLRYAFRSSSCSDIVWDTSYRNKLTPKSINHPDIENYIAALQSDIANDLTMHYFKPLKNLPAIIPQYKTMTLNGDKVSNGIRNSYIESHIPAINGLSAGINIAMPNGESLFSIIIYVRRVINKASYRFLYETGPTIGINAKHEEVCTGKCPSPIPHQDGWVTFSKERSSNWGCEEWGCLAINDGCLYGSCQDIIRPEYKIYKKSSIEQKDVEVCITMAHESFCSTVDVLQPLISDRIQLDIQTIQMDSMPNIIAVKNGKVYVGDINDLGSTAKKCGSVQLYSEGIIGSGTPKFDYVCHAFNRKDVILRRCFDNSYQSCLLLEQDNTLTIASTSHMEVHKKVSSVGTINYKIMLGDFDYNAYSTQATVTIDEIRCGGCYGCPEGMACALKLSTNTIGSCSIKSNCDTYIKIIAVDPMQSEYSIKLNCPLATETVSVSVCSASAYTKPSISKNQPKIVLNSLDETSYIEQHDKKCSTWLCRVYKEGISVIFQPLFGNLSFYWRLTIYIIISLIMLILFLYILIPLCKRLKGLLEYNERIYQMENKFK.

The first 17 residues, 1 to 17 (MLLNIVLISNLACLAFA), serve as a signal peptide directing secretion. The Lumenal portion of the chain corresponds to 18–209 (LPLKEGTRGS…ELMIESFCTN (192 aa)). Asparagine 40 carries N-linked (GlcNAc...) asparagine; by host glycosylation. The chain crosses the membrane as a helical span at residues 210–230 (LELILLVTFILVGSVMMMILT). At 231–314 (KTYIVYVFIP…PKTRKLCKSK (84 aa)) the chain is on the cytoplasmic side. A helical membrane pass occupies residues 315-335 (ISNIVLCVITSLIFFSFITPI). Topologically, residues 336 to 361 (SSQCIDIEKLPDEYITCKRELANIKS) are lumenal. Residues 362–382 (LTIDDTYSFIYSCTCIIVLIL) traverse the membrane as a helical segment. The Cytoplasmic segment spans residues 383-448 (LKKAAKYILY…FKFESSYNRT (66 aa)). The helical transmembrane segment at 449–469 (GLIIFMLLLVPTIVMTQETSI) threads the bilayer. The Lumenal segment spans residues 470-1361 (NCKNIQSTQL…GNLSFYWRLT (892 aa)). Residues cysteine 471 and cysteine 487 are joined by a disulfide bond. Asparagine 493 is a glycosylation site (N-linked (GlcNAc...) asparagine; by host). Disulfide bonds link cysteine 523–cysteine 550, cysteine 580–cysteine 589, and cysteine 591–cysteine 598. N-linked (GlcNAc...) asparagine; by host glycosylation is found at asparagine 686 and asparagine 1353. The helical transmembrane segment at 1362–1382 (IYIIISLIMLILFLYILIPLC) threads the bilayer. Topologically, residues 1383 to 1403 (KRLKGLLEYNERIYQMENKFK) are cytoplasmic.

This sequence belongs to the nairovirus envelope glycoprotein family. In terms of assembly, heterodimer with glycoprotein C; in prefusion state. Heterodimer with glycoprotein N; in prefusion state. Homotrimeric; in postfusion state. In terms of processing, specific enzymatic cleavage by host MBTPS1/S1P/SKI-1 endopeptidase yield glycoprotein N. Specific enzymatic cleavages by host furin-like protease and MBTPS1/S1P endopeptidase yield GP38. Post-translationally, glycosylated.

It localises to the host endoplasmic reticulum membrane. It is found in the virion membrane. Its subcellular location is the host Golgi apparatus membrane. Glycoprotein C and glycoprotein N interact with each other and are present at the surface of the virion. Glycoprotein N probably locks the Gn-Gc complex in a prefusion state. Glycoprotein N and glycoprotein C are able to attach the virion to host cell receptors. This attachment induces virion internalization predominantly through clathrin-dependent endocytosis. Its function is as follows. Glycoprotein C and glycoprotein N interact with each other and are present at the surface of the virion. The spikes at the surface of the virion are formed by an N-terminal extension of glycoprotein C. Glycoprotein N and glycoprotein C are able to attach the virion to host cell receptors. This attachment induces virion internalization predominantly through clathrin-dependent endocytosis. Class II fusion protein that promotes fusion of viral membrane with host endosomal membrane after endocytosis of the virion. Exposure to potassium is necessary for the conformational change leading to fusion. The polypeptide is Envelopment polyprotein (GP) (Bos taurus (Bovine)).